The chain runs to 353 residues: Protein RecA (353 aa).

ATP is bound at residue 67–74 (GPESSGKT).

This sequence belongs to the RecA family.

The protein resides in the cytoplasm. In terms of biological role, can catalyze the hydrolysis of ATP in the presence of single-stranded DNA, the ATP-dependent uptake of single-stranded DNA by duplex DNA, and the ATP-dependent hybridization of homologous single-stranded DNAs. It interacts with LexA causing its activation and leading to its autocatalytic cleavage. This Shewanella woodyi (strain ATCC 51908 / MS32) protein is Protein RecA.